The chain runs to 251 residues: Triosephosphate isomerase (251 aa).

9-11 is a binding site for substrate; sequence NWK. Histidine 95 serves as the catalytic Electrophile. Glutamate 167 (proton acceptor) is an active-site residue. Substrate-binding positions include glycine 173, serine 213, and 234 to 235; that span reads GG.

Belongs to the triosephosphate isomerase family. As to quaternary structure, homodimer.

It is found in the cytoplasm. The enzyme catalyses D-glyceraldehyde 3-phosphate = dihydroxyacetone phosphate. Its pathway is carbohydrate biosynthesis; gluconeogenesis. The protein operates within carbohydrate degradation; glycolysis; D-glyceraldehyde 3-phosphate from glycerone phosphate: step 1/1. Involved in the gluconeogenesis. Catalyzes stereospecifically the conversion of dihydroxyacetone phosphate (DHAP) to D-glyceraldehyde-3-phosphate (G3P). The chain is Triosephosphate isomerase from Trichlorobacter lovleyi (strain ATCC BAA-1151 / DSM 17278 / SZ) (Geobacter lovleyi).